A 157-amino-acid chain; its full sequence is SsrA-binding protein (157 aa).

This sequence belongs to the SmpB family.

The protein localises to the cytoplasm. Its function is as follows. Required for rescue of stalled ribosomes mediated by trans-translation. Binds to transfer-messenger RNA (tmRNA), required for stable association of tmRNA with ribosomes. tmRNA and SmpB together mimic tRNA shape, replacing the anticodon stem-loop with SmpB. tmRNA is encoded by the ssrA gene; the 2 termini fold to resemble tRNA(Ala) and it encodes a 'tag peptide', a short internal open reading frame. During trans-translation Ala-aminoacylated tmRNA acts like a tRNA, entering the A-site of stalled ribosomes, displacing the stalled mRNA. The ribosome then switches to translate the ORF on the tmRNA; the nascent peptide is terminated with the 'tag peptide' encoded by the tmRNA and targeted for degradation. The ribosome is freed to recommence translation, which seems to be the essential function of trans-translation. The chain is SsrA-binding protein from Christiangramia forsetii (strain DSM 17595 / CGMCC 1.15422 / KT0803) (Gramella forsetii).